Consider the following 434-residue polypeptide: UDP-N-acetylmuramate--L-alanine ligase (434 aa).

Gly-108–Thr-114 serves as a coordination point for ATP.

The protein belongs to the MurCDEF family.

It is found in the cytoplasm. The enzyme catalyses UDP-N-acetyl-alpha-D-muramate + L-alanine + ATP = UDP-N-acetyl-alpha-D-muramoyl-L-alanine + ADP + phosphate + H(+). The protein operates within cell wall biogenesis; peptidoglycan biosynthesis. Functionally, cell wall formation. This is UDP-N-acetylmuramate--L-alanine ligase from Geobacillus thermodenitrificans (strain NG80-2).